The primary structure comprises 456 residues: Tyrosine phenol-lyase (456 aa).

Residue lysine 257 is modified to N6-(pyridoxal phosphate)lysine.

Belongs to the beta-eliminating lyase family. As to quaternary structure, homotetramer. Pyridoxal 5'-phosphate is required as a cofactor. Contains L-DOPA (3',4'-dihydroxyphenylalanine).

It localises to the cytoplasm. The enzyme catalyses L-tyrosine + H2O = phenol + pyruvate + NH4(+). This is Tyrosine phenol-lyase (tpl) from Enterobacter agglomerans (Erwinia herbicola).